The primary structure comprises 220 residues: Urease accessory protein UreF (220 aa).

The protein belongs to the UreF family. As to quaternary structure, ureD, UreF and UreG form a complex that acts as a GTP-hydrolysis-dependent molecular chaperone, activating the urease apoprotein by helping to assemble the nickel containing metallocenter of UreC. The UreE protein probably delivers the nickel.

It is found in the cytoplasm. Required for maturation of urease via the functional incorporation of the urease nickel metallocenter. The chain is Urease accessory protein UreF from Jannaschia sp. (strain CCS1).